The sequence spans 222 residues: Peptide methionine sulfoxide reductase MsrA (222 aa).

Cys54 is a catalytic residue.

The protein belongs to the MsrA Met sulfoxide reductase family.

It carries out the reaction L-methionyl-[protein] + [thioredoxin]-disulfide + H2O = L-methionyl-(S)-S-oxide-[protein] + [thioredoxin]-dithiol. The enzyme catalyses [thioredoxin]-disulfide + L-methionine + H2O = L-methionine (S)-S-oxide + [thioredoxin]-dithiol. Has an important function as a repair enzyme for proteins that have been inactivated by oxidation. Catalyzes the reversible oxidation-reduction of methionine sulfoxide in proteins to methionine. The chain is Peptide methionine sulfoxide reductase MsrA from Methylococcus capsulatus (strain ATCC 33009 / NCIMB 11132 / Bath).